The sequence spans 239 residues: Probable transcriptional regulatory protein ACL_0044 (239 aa).

This sequence belongs to the TACO1 family.

It is found in the cytoplasm. The chain is Probable transcriptional regulatory protein ACL_0044 from Acholeplasma laidlawii (strain PG-8A).